The following is a 380-amino-acid chain: MGAGGCISVSETKPNQKNSLERAPYDKPPFTISDLKKAIPPHLFKRSLIRSLSYVASDLTVAFLLYHATTYFHHLPQPFTALAWLAYWVAQGCVLTGVWVIGHECGHHGLSEYRGVDDTVGYILHSSLLVPYFSWKYSHRRHHSNTGSLDRDEVFVPKPRSKISWYSKYFNNPVGRIGVLFITLTLGWPLYLTFNVSGRPYDRFACHYSPNSPIYNNRERFQIYLSDIGIVITSLVLLRAAMVKGLVWLICVYGVPLMITNGFLVLVTYLQHTHPSLPHYDNSEWEWLKGALVTVDRDFGVLNTVFHHATDGHIVHHLFPTIPHYNAMEATKAVKPLMGEYYQYDATPFYVAMWREAKECLFVDRDEGEKGGVFWYKNKM.

Positions 1–25 are disordered; the sequence is MGAGGCISVSETKPNQKNSLERAPY. The segment covering 9–18 has biased composition (polar residues); the sequence is VSETKPNQKN. Helical transmembrane passes span 52-72 and 81-101; these read LSYV…TTYF and ALAW…VWVI. Residues 103–107 carry the Histidine box-1 motif; that stretch reads HECGH. Positions 139 to 143 match the Histidine box-2 motif; that stretch reads HRRHH. Helical transmembrane passes span 177–197, 223–243, and 247–267; these read IGVL…FNVS, IYLS…AAMV, and VWLI…LVLV. Residues 313 to 317 carry the Histidine box-3 motif; that stretch reads HIVHH.

The protein belongs to the fatty acid desaturase type 1 family.

The protein resides in the membrane. It carries out the reaction a (9Z)-octadecenoyl-containing glycerolipid + 2 Fe(II)-[cytochrome b5] + O2 + 2 H(+) = a (9Z,12E)-octadecadienoyl-containing glycerolipid + 2 Fe(III)-[cytochrome b5] + 2 H2O. It catalyses the reaction a (9Z)-hexadecenoyl-containing glycerolipid + 2 Fe(II)-[cytochrome b5] + O2 + 2 H(+) = a (9Z,12E)-hexadecadienoyl-containing glycerolipid + 2 Fe(III)-[cytochrome b5] + 2 H2O. Its function is as follows. Involved in the biosynthesis of dimorphecolic acid (9-OH-18:2(10E,12E)). Converts oleic acid (18:1(9Z)) into 18:2(9Z,12E) and probably palmitoleic acid (16:1(9Z)) into 16:2(9Z,12E). Very limited ability to catalyze (Z)-delta(12) desaturation. The polypeptide is Acyl-lipid (9+3)-(E)-desaturase (Dimorphotheca sinuata (African daisy)).